The chain runs to 564 residues: Isopullulanase (564 aa).

The N-terminal stretch at 1–19 (MRSTGYLLTLSAAFQVAQA) is a signal peptide. Residues Asn24, Asn94, Asn115, Asn138, Asn186, Asn210, Asn305, Asn381, Asn448, Asn455, Asn460, Asn486, Asn491, Asn503, and Asn535 are each glycosylated (N-linked (GlcNAc...) asparagine).

N-glycosylated.

It is found in the secreted. The catalysed reaction is Hydrolysis of pullulan to isopanose (6-alpha-maltosylglucose).. Functionally, hydrolyzes pullulan, a linear polymer which is composed of maltotriose units with alpha-1,6 glucosidic linkages, to produce isopanose (Glca1-4Glca1-6Glc). The protein is Isopullulanase (ipuA) of Aspergillus niger.